The following is a 334-amino-acid chain: Ferric enterobactin transport system permease protein FepD (334 aa).

Residues 1–9 lie on the Periplasmic side of the membrane; it reads MSGSVAVTR. Residues 10-30 traverse the membrane as a helical segment; that stretch reads AIAVPGLLLLLIIATALSLLI. The Cytoplasmic segment spans residues 31–63; the sequence is GAKSLPASVVLEAFSGTCQSADCTIVLDARLPR. The helical transmembrane segment at 64-84 threads the bilayer; that stretch reads TLAGLLAGGALGLAGALMQTL. Topologically, residues 85–92 are periplasmic; sequence TRNPLADP. A helical membrane pass occupies residues 93–113; it reads GLLGVNAGASFAIVLGAALFG. Residues 114 to 120 are Cytoplasmic-facing; it reads YSSAQEQ. The helical transmembrane segment at 121 to 141 threads the bilayer; it reads LAMAFAGALVASLIVAFTGSQ. The Periplasmic portion of the chain corresponds to 142–151; it reads GGGQLSPVRL. Residues 152-172 form a helical membrane-spanning segment; that stretch reads TLAGVALAAVLEGLTSGIALL. Residues 173–192 are Cytoplasmic-facing; the sequence is NPDVYDQLRFWQAGSLDIRN. Residues 193-213 traverse the membrane as a helical segment; it reads LHTLKVVLIPVLIAGATALLL. The Periplasmic segment spans residues 214–241; that stretch reads SRALNSLSLGSDTATALGSRVARTQLIG. A helical membrane pass occupies residues 242-262; sequence LLAITVLCGSATAIVGPIAFI. At 263–279 the chain is on the cytoplasmic side; sequence GLMMPHMARWLVGADHR. Residues 280 to 300 traverse the membrane as a helical segment; that stretch reads WSLPVTLLATPALLLFADIIG. Topologically, residues 301–305 are periplasmic; sequence RVIVP. A helical transmembrane segment spans residues 306-326; the sequence is GELRVSVVSAFIGAPVLIFLV. The Cytoplasmic segment spans residues 327–334; sequence RRKTRGGA.

It belongs to the binding-protein-dependent transport system permease family. FecCD subfamily. As to quaternary structure, the complex is composed of two ATP-binding proteins (FepC), two transmembrane proteins (FepD and FepG) and a solute-binding protein (FepB).

The protein resides in the cell inner membrane. Functionally, part of the ABC transporter complex FepBDGC involved in ferric enterobactin uptake. Responsible for the translocation of the substrate across the membrane. The chain is Ferric enterobactin transport system permease protein FepD (fepD) from Escherichia coli (strain K12).